Consider the following 183-residue polypeptide: Ribosome-recycling factor (183 aa).

The protein belongs to the RRF family.

It localises to the cytoplasm. Responsible for the release of ribosomes from messenger RNA at the termination of protein biosynthesis. May increase the efficiency of translation by recycling ribosomes from one round of translation to another. The polypeptide is Ribosome-recycling factor (Mycoplasma mobile (strain ATCC 43663 / 163K / NCTC 11711) (Mesomycoplasma mobile)).